The primary structure comprises 143 residues: Actin-depolymerizing factor (143 aa).

Residues 11 to 143 (GMGVADHSKN…DLEVLRERAH (133 aa)) enclose the ADF-H domain.

Belongs to the actin-binding proteins ADF family.

In terms of biological role, actin-depolymerizing protein. Severs actin filaments (F-actin) and binds to actin monomers. The protein is Actin-depolymerizing factor of Vitis vinifera (Grape).